A 245-amino-acid chain; its full sequence is 1-(5-phosphoribosyl)-5-[(5-phosphoribosylamino)methylideneamino] imidazole-4-carboxamide isomerase (245 aa).

D7 functions as the Proton acceptor in the catalytic mechanism. The active-site Proton donor is D129.

This sequence belongs to the HisA/HisF family.

It is found in the cytoplasm. It catalyses the reaction 1-(5-phospho-beta-D-ribosyl)-5-[(5-phospho-beta-D-ribosylamino)methylideneamino]imidazole-4-carboxamide = 5-[(5-phospho-1-deoxy-D-ribulos-1-ylimino)methylamino]-1-(5-phospho-beta-D-ribosyl)imidazole-4-carboxamide. It functions in the pathway amino-acid biosynthesis; L-histidine biosynthesis; L-histidine from 5-phospho-alpha-D-ribose 1-diphosphate: step 4/9. This is 1-(5-phosphoribosyl)-5-[(5-phosphoribosylamino)methylideneamino] imidazole-4-carboxamide isomerase from Shewanella amazonensis (strain ATCC BAA-1098 / SB2B).